The chain runs to 1040 residues: Multidrug resistance protein MdtB (1040 aa).

The next 12 membrane-spanning stretches (helical) occupy residues 16-36, 347-367, 369-389, 396-416, 440-460, 472-492, 537-557, 863-883, 888-908, 911-931, 968-988, and 998-1018; these read FIMR…AGII, LMMA…NIPA, IIPG…MVFL, LTLM…IVVI, IGFT…PLLF, FAIT…TLTP, WLTL…WVFI, LGST…VLGI, FIHP…ALLA, IAGS…IGIV, ILMT…STGV, and IGMV…TPVI.

This sequence belongs to the resistance-nodulation-cell division (RND) (TC 2.A.6) family. MdtB subfamily. As to quaternary structure, part of a tripartite efflux system composed of MdtA, MdtB and MdtC. MdtB forms a heteromultimer with MdtC.

The protein resides in the cell inner membrane. The MdtABC tripartite complex confers resistance against novobiocin and deoxycholate. This Escherichia coli O8 (strain IAI1) protein is Multidrug resistance protein MdtB.